We begin with the raw amino-acid sequence, 634 residues long: Zinc finger and BTB domain-containing protein 22 (634 aa).

One can recognise a BTB domain in the interval 57-121 (CDVSIRVQGR…AYTGRLSMAA (65 aa)). 2 disordered regions span residues 167–247 (TVPG…APVV) and 308–461 (APTP…GTSV). Residues 180-198 (TVAPATMGSARSHASSRAS) show a composition bias toward low complexity. Positions 199–209 (ENQSPSSSNYF) are enriched in polar residues. Residue Ser202 is modified to Phosphoserine. Over residues 217–229 (FSSSSQEAFAASA) the composition is skewed to low complexity. Over residues 317–340 (PDLEEEEEEEDLVLTCEDDEDEEL) the composition is skewed to acidic residues. A compositionally biased stretch (low complexity) spans 452 to 461 (GAVTVGGTSV). Residues 486–507 (FLCHCGKAFSHKSMRDRHVNMH) form a C2H2-type 1; atypical zinc finger. 2 consecutive C2H2-type zinc fingers follow at residues 513–535 (FDCP…MKTH) and 541–562 (YECG…HRGH). Residues 568 to 634 (RLGGVGAVPG…MGFGGGGGAN (67 aa)) are disordered. The segment covering 608-618 (PPSSRRVWSPP) has biased composition (low complexity).

The protein belongs to the krueppel C2H2-type zinc-finger protein family.

The protein localises to the nucleus. May be involved in transcriptional regulation. This is Zinc finger and BTB domain-containing protein 22 (ZBTB22) from Homo sapiens (Human).